The following is a 971-amino-acid chain: Mating-type switching protein swi1 (971 aa).

Serine 528, serine 536, and serine 970 each carry phosphoserine.

Fork protection complex (FPC) consisting of swi1 and swi3 interacts with mat1 cis-acting sequences and mat1-proximal polar-terminator of replication (RTS1).

It localises to the nucleus. Functionally, forms a fork protection complex (FPC) with swi3. FPC coordinates leading and lagging strand synthesis and moves with the replication fork. It is required for programmed fork-pausing which is necessary for mating-type switching. FPC stabilizes replication forks in a configuration that is recognized by replication checkpoint sensors. It is involved in termination at the mat1-proximal polar-terminator of replication (RTS1) and also required for activation of the Rad53-like checkpoint kinase cds1. The polypeptide is Mating-type switching protein swi1 (swi1) (Schizosaccharomyces pombe (strain 972 / ATCC 24843) (Fission yeast)).